A 643-amino-acid chain; its full sequence is Phosphomethylpyrimidine synthase (643 aa).

Residues Asn248, Met277, Tyr306, His342, 362–364 (SRG), 403–406 (DGLR), and Glu442 each bind substrate. A Zn(2+)-binding site is contributed by His446. Tyr469 contacts substrate. His510 contacts Zn(2+). [4Fe-4S] cluster is bound by residues Cys590, Cys593, and Cys598.

The protein belongs to the ThiC family. In terms of assembly, homodimer. [4Fe-4S] cluster serves as cofactor.

It carries out the reaction 5-amino-1-(5-phospho-beta-D-ribosyl)imidazole + S-adenosyl-L-methionine = 4-amino-2-methyl-5-(phosphooxymethyl)pyrimidine + CO + 5'-deoxyadenosine + formate + L-methionine + 3 H(+). Its pathway is cofactor biosynthesis; thiamine diphosphate biosynthesis. Catalyzes the synthesis of the hydroxymethylpyrimidine phosphate (HMP-P) moiety of thiamine from aminoimidazole ribotide (AIR) in a radical S-adenosyl-L-methionine (SAM)-dependent reaction. The protein is Phosphomethylpyrimidine synthase of Burkholderia orbicola (strain MC0-3).